Reading from the N-terminus, the 815-residue chain is Bifunctional aspartokinase/homoserine dehydrogenase (815 aa).

Positions 1–249 (MRVLKFGGTS…VPDARLLPTL (249 aa)) are aspartokinase. Residues 250-470 (SYREAMELSY…NNKKVVDMFL (221 aa)) form an interface region. 2 consecutive ACT domains span residues 320 to 392 (VSGP…PIEV) and 401 to 478 (VVGD…GVGG). The segment at 471–815 (VGVGGVGGEL…FADILRTLQH (345 aa)) is homoserine dehydrogenase. Residues V473, G475, V476, A504, and T555 each coordinate NAD(+). NADP(+) is bound at residue V476. Residue V476 coordinates NADPH. Residue T555 coordinates NADP(+). Residues T555, S556, and K579 each contribute to the NADPH site. K579 contributes to the NADP(+) binding site. Residues E606, V609, A611, and L613 each coordinate Na(+). Residues G664 and E667 each contribute to the NADP(+) site. Residues E667 and D678 each contribute to the L-homoserine site. Catalysis depends on K682, which acts as the Proton donor. NAD(+) is bound at residue G797. NADP(+) is bound at residue G797. Residue G797 coordinates NADPH.

The protein in the N-terminal section; belongs to the aspartokinase family. This sequence in the C-terminal section; belongs to the homoserine dehydrogenase family. In terms of assembly, homotetramer. A metal cation serves as cofactor.

The enzyme catalyses L-homoserine + NADP(+) = L-aspartate 4-semialdehyde + NADPH + H(+). It catalyses the reaction L-homoserine + NAD(+) = L-aspartate 4-semialdehyde + NADH + H(+). The catalysed reaction is L-aspartate + ATP = 4-phospho-L-aspartate + ADP. Its pathway is amino-acid biosynthesis; L-lysine biosynthesis via DAP pathway; (S)-tetrahydrodipicolinate from L-aspartate: step 1/4. The protein operates within amino-acid biosynthesis; L-methionine biosynthesis via de novo pathway; L-homoserine from L-aspartate: step 1/3. It functions in the pathway amino-acid biosynthesis; L-methionine biosynthesis via de novo pathway; L-homoserine from L-aspartate: step 3/3. It participates in amino-acid biosynthesis; L-threonine biosynthesis; L-threonine from L-aspartate: step 1/5. Its pathway is amino-acid biosynthesis; L-threonine biosynthesis; L-threonine from L-aspartate: step 3/5. Functionally, bifunctional aspartate kinase and homoserine dehydrogenase that catalyzes the first and the third steps toward the synthesis of lysine, methionine and threonine from aspartate. The polypeptide is Bifunctional aspartokinase/homoserine dehydrogenase (thrA) (Haemophilus influenzae (strain ATCC 51907 / DSM 11121 / KW20 / Rd)).